The following is a 287-amino-acid chain: 4,4'-diapophytoene synthase (287 aa).

(2E,6E)-farnesyl diphosphate is bound by residues 18-21 (HSKS), Tyr-41, and Arg-45. Residues Asp-48 and Asp-52 each contribute to the Mg(2+) site. A (2E,6E)-farnesyl diphosphate-binding site is contributed by Gln-165. Asn-168 lines the Mg(2+) pocket. Position 171 (Arg-171) interacts with (2E,6E)-farnesyl diphosphate. Asp-172 contributes to the Mg(2+) binding site. Tyr-248 provides a ligand contact to (2E,6E)-farnesyl diphosphate.

This sequence belongs to the phytoene/squalene synthase family. CrtM subfamily. Mg(2+) is required as a cofactor.

It catalyses the reaction 2 (2E,6E)-farnesyl diphosphate = 15-cis-4,4'-diapophytoene + 2 diphosphate. It functions in the pathway carotenoid biosynthesis; staphyloxanthin biosynthesis; staphyloxanthin from farnesyl diphosphate: step 1/5. Involved in the biosynthesis of the yellow-orange carotenoid staphyloxanthin, which plays a role in the virulence via its protective function against oxidative stress. Catalyzes the head-to-head condensation of two molecules of farnesyl diphosphate (FPP) into the colorless C(30) carotenoid 4,4'-diapophytoene (dehydrosqualene). This Staphylococcus aureus (strain bovine RF122 / ET3-1) protein is 4,4'-diapophytoene synthase (crtM).